The primary structure comprises 835 residues: Involucrin (835 aa).

Polar residues predominate over residues 1-15 (MSQQHTLPVTLSPAL). Disordered stretches follow at residues 1-133 (MSQQ…LDQR), 150-206 (EQLL…LEVP), 221-285 (GQLK…QLKH), 321-342 (GQLKHLDQQEGQLELPEQQEGQ), 381-428 (GQLK…VPEE), 446-486 (LDQQ…LEVP), 501-548 (GQLK…VPEE), and 566-809 (LDQQ…QPAL). The segment covering 76–91 (EQQQQEPQEQELQQQH) has biased composition (low complexity). Basic and acidic residues-rich tracts occupy residues 92–115 (WEQHEEHQKAENPEQQLKQEKAQR) and 159–168 (QEQHLKHLEQ). Low complexity predominate over residues 169 to 181 (QEGQLELPEQQEG). Composition is skewed to basic and acidic residues over residues 182–198 (QLKHLEQQEGQLKHLEQ) and 222–268 (QLKH…HLDQ). Low complexity-rich tracts occupy residues 269–281 (QEGQLELPEQQEG), 329–341 (QEGQLELPEQQEG), and 389–401 (QEGQLELPEQQEG). Composition is skewed to basic and acidic residues over residues 402–421 (QLKHLEQQEGQLKHLEHQEG) and 446–464 (LDQQEGQLKHLDQQEKQLE). Over residues 509–521 (QEGQLELPEQQEG) the composition is skewed to low complexity. Composition is skewed to basic and acidic residues over residues 522–541 (QLKHLEQQEGQLKHLEHQEG), 566–584 (LDQQEGQLKHLDQQEKQLE), and 594–620 (KHLEQQEGQLEHLEGQEGQLEHLEHQE). The span at 655 to 668 (HLVQQEGQLEQQEG) shows a compositional bias: low complexity. The segment covering 669–685 (QVEHLEEQVGQLKHLEE) has biased composition (basic and acidic residues). Positions 693–710 (LEQQQGQLEVPEQQVGQP) are enriched in low complexity. Composition is skewed to basic and acidic residues over residues 711–721 (KHLEQEEKQLE), 729–738 (QLKHLEKQEA), and 751–775 (KHLEQQEKQLEHPEQKDGQLKHLEQ). Residues 776-789 (QEGQLKNLEQQKGQ) show a composition bias toward polar residues.

This sequence belongs to the involucrin family. As to quaternary structure, directly or indirectly cross-linked to cornifelin (CNFN). Substrate of transglutaminase. Specific glutamines or lysines are cross-linked to keratins, desmoplakin and to inter involucrin molecules. In terms of tissue distribution, keratinocytes of epidermis and other stratified squamous epithelia.

It localises to the cytoplasm. Its function is as follows. Part of the insoluble cornified cell envelope (CE) of stratified squamous epithelia. In Pongo pygmaeus (Bornean orangutan), this protein is Involucrin (IVL).